Reading from the N-terminus, the 654-residue chain is Bifunctional polymyxin resistance protein ArnA (654 aa).

The tract at residues 1-303 is formyltransferase ArnAFT; sequence MKVIVFAYHE…NISRIKGKKL (303 aa). Catalysis depends on histidine 105, which acts as the Proton donor; for formyltransferase activity. 137 to 141 lines the (6R)-10-formyltetrahydrofolate pocket; the sequence is TKKID. A dehydrogenase ArnADH region spans residues 313 to 654; that stretch reads NLKKILILGV…INFFINNNTS (342 aa). NAD(+) is bound by residues aspartate 346 and 367 to 368; that span reads DI. UDP-alpha-D-glucuronate contacts are provided by residues alanine 392, tyrosine 397, and 431–432; that span reads TS. Glutamate 433 (proton acceptor; for decarboxylase activity) is an active-site residue. Residues arginine 459, asparagine 491, 532 to 534, and tyrosine 612 contribute to the UDP-alpha-D-glucuronate site; that span reads QKR. Arginine 618 functions as the Proton donor; for decarboxylase activity in the catalytic mechanism.

In the N-terminal section; belongs to the Fmt family. UDP-L-Ara4N formyltransferase subfamily. This sequence in the C-terminal section; belongs to the NAD(P)-dependent epimerase/dehydratase family. UDP-glucuronic acid decarboxylase subfamily. In terms of assembly, homohexamer, formed by a dimer of trimers.

The catalysed reaction is UDP-alpha-D-glucuronate + NAD(+) = UDP-beta-L-threo-pentopyranos-4-ulose + CO2 + NADH. The enzyme catalyses UDP-4-amino-4-deoxy-beta-L-arabinose + (6R)-10-formyltetrahydrofolate = UDP-4-deoxy-4-formamido-beta-L-arabinose + (6S)-5,6,7,8-tetrahydrofolate + H(+). Its pathway is nucleotide-sugar biosynthesis; UDP-4-deoxy-4-formamido-beta-L-arabinose biosynthesis; UDP-4-deoxy-4-formamido-beta-L-arabinose from UDP-alpha-D-glucuronate: step 1/3. It functions in the pathway nucleotide-sugar biosynthesis; UDP-4-deoxy-4-formamido-beta-L-arabinose biosynthesis; UDP-4-deoxy-4-formamido-beta-L-arabinose from UDP-alpha-D-glucuronate: step 3/3. The protein operates within bacterial outer membrane biogenesis; lipopolysaccharide biosynthesis. Its function is as follows. Bifunctional enzyme that catalyzes the oxidative decarboxylation of UDP-glucuronic acid (UDP-GlcUA) to UDP-4-keto-arabinose (UDP-Ara4O) and the addition of a formyl group to UDP-4-amino-4-deoxy-L-arabinose (UDP-L-Ara4N) to form UDP-L-4-formamido-arabinose (UDP-L-Ara4FN). The modified arabinose is attached to lipid A and is required for resistance to polymyxin and cationic antimicrobial peptides. The polypeptide is Bifunctional polymyxin resistance protein ArnA (Wigglesworthia glossinidia brevipalpis).